The chain runs to 437 residues: F-box only protein 9 (437 aa).

The disordered stretch occupies residues 1–26 (MSAEAEEDCHSDADRVGDEGNESPAE). At serine 2 the chain carries N-acetylalanine. The span at 8-26 (DCHSDADRVGDEGNESPAE) shows a compositional bias: basic and acidic residues. Position 10 is a phosphoserine (histidine 10). The stretch at 84-117 (ARELFLQAVEEEQNGALYEAIKFYRRAMQLVPDI) is one TPR repeat. Residue serine 126 is modified to Phosphoserine. Residues 175–226 (QTHISVLPMEVLMYIFRWVVSSDLDLRSLEQLSLVCRGFYICARDPEIWRLA) enclose the F-box domain.

As to quaternary structure, part of the SCF (SKP1-CUL1-F-box) E3 ubiquitin-protein ligase complex SCF(FBXO9) composed of CUL1, SKP1, RBX1 and FBXO9. Interacts with TTI1 and TELO2; when TTI1 and TELO2 are phosphorylated by CK2.

Its subcellular location is the cytoplasm. The protein operates within protein modification; protein ubiquitination. Substrate recognition component of a SCF (SKP1-CUL1-F-box protein) E3 ubiquitin-protein ligase complex which mediates the ubiquitination and subsequent proteasomal degradation of target proteins and plays a role in several biological processes such as cell cycle, cell proliferation, or maintenance of chromosome stability. Ubiquitinates mTORC1-bound TTI1 and TELO2 when they are phosphorylated by CK2 following growth factor deprivation, leading to their degradation. In contrast, does not mediate ubiquitination of TTI1 and TELO2 when they are part of the mTORC2 complex. As a consequence, mTORC1 is inactivated to restrain cell growth and protein translation, while mTORC2 is the activated due to the relief of feedback inhibition by mTORC1. Plays a role in maintaining epithelial cell survival by regulating the turn-over of chromatin modulator PRMT4 through ubiquitination and degradation by the proteasomal pathway. Also regulates PPARgamma stability by facilitating PPARgamma/PPARG ubiquitination and thereby plays a role in adipocyte differentiation. In Mus musculus (Mouse), this protein is F-box only protein 9 (Fbxo9).